The sequence spans 207 residues: dTTP/UTP pyrophosphatase (207 aa).

Asp-87 (proton acceptor) is an active-site residue.

The protein belongs to the Maf family. YhdE subfamily. The cofactor is a divalent metal cation.

Its subcellular location is the cytoplasm. The enzyme catalyses dTTP + H2O = dTMP + diphosphate + H(+). It carries out the reaction UTP + H2O = UMP + diphosphate + H(+). Nucleoside triphosphate pyrophosphatase that hydrolyzes dTTP and UTP. May have a dual role in cell division arrest and in preventing the incorporation of modified nucleotides into cellular nucleic acids. The polypeptide is dTTP/UTP pyrophosphatase (Bordetella bronchiseptica (strain ATCC BAA-588 / NCTC 13252 / RB50) (Alcaligenes bronchisepticus)).